We begin with the raw amino-acid sequence, 90 residues long: Small ribosomal subunit protein uS15c (90 aa).

The protein belongs to the universal ribosomal protein uS15 family. Part of the 30S ribosomal subunit.

Its subcellular location is the plastid. The protein resides in the chloroplast. In Morus indica (Mulberry), this protein is Small ribosomal subunit protein uS15c (rps15).